The sequence spans 120 residues: Proteinase inhibitor (120 aa).

An N-terminal signal peptide occupies residues 1–19; sequence MKQLIIATLLSALSGGCMA. Cysteine 43 and cysteine 65 are disulfide-bonded.

Belongs to the protease inhibitor I38 family. Monomer.

The protein resides in the periplasm. Functionally, inhibitor of the extracellular proteases A, B, and C of E.chrysanthemi and the S.marcescens 50 kDa extracellular protease. It forms a non-covalent bond with the proteases and may prevent autocatalytic cleavage of the proteases zymogen in the periplasm. The sequence is that of Proteinase inhibitor (inh) from Dickeya chrysanthemi (Pectobacterium chrysanthemi).